The primary structure comprises 284 residues: WUSCHEL-related homeobox 10 (284 aa).

A disordered region spans residues Met1–Arg43. The segment at residues Pro39 to Ala103 is a DNA-binding region (homeobox; WUS-type).

Belongs to the WUS homeobox family.

The protein resides in the nucleus. Transcription factor which may be involved in developmental processes. In Oryza sativa subsp. japonica (Rice), this protein is WUSCHEL-related homeobox 10 (WOX10).